Reading from the N-terminus, the 615-residue chain is Membrane protein insertase YidC (615 aa).

A run of 5 helical transmembrane segments spans residues Leu-9–Pro-29, Leu-384–Tyr-404, Leu-458–Ile-478, Leu-516–Trp-536, and Trp-556–Trp-576.

Belongs to the OXA1/ALB3/YidC family. Type 1 subfamily. As to quaternary structure, interacts with the Sec translocase complex via SecD. Specifically interacts with transmembrane segments of nascent integral membrane proteins during membrane integration.

The protein resides in the cell inner membrane. In terms of biological role, required for the insertion and/or proper folding and/or complex formation of integral membrane proteins into the membrane. Involved in integration of membrane proteins that insert both dependently and independently of the Sec translocase complex, as well as at least some lipoproteins. Aids folding of multispanning membrane proteins. The sequence is that of Membrane protein insertase YidC from Caulobacter vibrioides (strain ATCC 19089 / CIP 103742 / CB 15) (Caulobacter crescentus).